The chain runs to 102 residues: Small ribosomal subunit protein uS10 (102 aa).

This sequence belongs to the universal ribosomal protein uS10 family. Part of the 30S ribosomal subunit.

Involved in the binding of tRNA to the ribosomes. The polypeptide is Small ribosomal subunit protein uS10 (Geotalea daltonii (strain DSM 22248 / JCM 15807 / FRC-32) (Geobacter daltonii)).